Consider the following 727-residue polypeptide: BRCA1-A complex subunit RAP80 (727 aa).

Residues 1–23 (MPRRKKKIKEASESQNLEKKDLE) form a disordered region. A necessary for transcriptional repression region spans residues 1-101 (MPRRKKKIKE…SEQEAREVNN (101 aa)). Residues 9–23 (KEASESQNLEKKDLE) show a composition bias toward basic and acidic residues. Residue Lys20 forms a Glycyl lysine isopeptide (Lys-Gly) (interchain with G-Cter in SUMO2) linkage. Ser29 bears the Phosphoserine mark. Lys31 participates in a covalent cross-link: Glycyl lysine isopeptide (Lys-Gly) (interchain with G-Cter in SUMO2). Phosphoserine is present on residues Ser44 and Ser46. Residues 45–70 (DSDGEETKEENGLQKTKTKQSNRSKC) are disordered. Position 51 is a phosphothreonine (Thr51). Residues 60 to 70 (TKTKQSNRSKC) show a composition bias toward basic residues. The LR motif motif lies at 60 to 78 (TKTKQSNRSKCLAKRKVAH). Glycyl lysine isopeptide (Lys-Gly) (interchain with G-Cter in SUMO2) cross-links involve residues Lys75 and Lys90. UIM domains lie at 80–99 (SEEE…AREV) and 104–124 (EKEE…CWSS). The tract at residues 97–103 (REVNNQE) is UIM-linker. The interval 100-200 (NNQEEKEEEL…EEPVSGSSGS (101 aa)) is necessary for interaction with NR6A1 N-terminus. The disordered stretch occupies residues 133–206 (PLAAELSSHS…SSGSWDQSSQ (74 aa)). A Phosphoserine modification is found at Ser140. Positions 176 to 188 (AEQRKEPWDHNEN) are enriched in basic and acidic residues. Low complexity predominate over residues 195-206 (SGSSGSWDQSSQ). Phosphoserine is present on Ser205. Lys245 is covalently cross-linked (Glycyl lysine isopeptide (Lys-Gly) (interchain with G-Cter in SUMO2)). An AIR region spans residues 270–400 (TGGTVHYYWG…EEEPTTSRGQ (131 aa)). A disordered region spans residues 326 to 427 (PRPPFLIQNE…SEGDNSVPTT (102 aa)). A compositionally biased stretch (basic and acidic residues) spans 355–364 (DEAKEERQES). Ser379 is subject to Phosphoserine. Residues Lys382 and Lys387 each participate in a glycyl lysine isopeptide (Lys-Gly) (interchain with G-Cter in SUMO2) cross-link. A necessary for interaction with NR6A1 C-terminus region spans residues 400–508 (QSSQGLFVEE…ENPPPAVSSS (109 aa)). The residue at position 402 (Ser402) is a Phosphoserine. A Glycyl lysine isopeptide (Lys-Gly) (interchain with G-Cter in SUMO2) cross-link involves residue Lys436. Ser474 is modified (phosphoserine). A UBZ4-type zinc finger spans residues 510–537 (RVSCPLCNQDFPPTKIEQHAMYCNGLME). Residues Cys513, Cys516, His528, and Cys532 each contribute to the Zn(2+) site. Residues 513-590 (CPLCNQDFPP…GEYQCHVEAC (78 aa)) are zinc-finger-like region. Residues Lys552, Lys570, Lys595, and Lys617 each participate in a glycyl lysine isopeptide (Lys-Gly) (interchain with G-Cter in SUMO2) cross-link. The disordered stretch occupies residues 607 to 654 (RPRVCAPVEGKQQQRLKKSKDKGHSQGRLLSLLEQSEHRTTGVEKKPK). Ser637 carries the phosphoserine modification. Residues 641-654 (QSEHRTTGVEKKPK) show a composition bias toward basic and acidic residues. Residue Lys652 forms a Glycyl lysine isopeptide (Lys-Gly) (interchain with G-Cter in SUMO2) linkage. Phosphoserine is present on residues Ser665 and Ser689. Lys708 is covalently cross-linked (Glycyl lysine isopeptide (Lys-Gly) (interchain with G-Cter in SUMO2)).

The protein belongs to the RAP80 family. Component of the ARISC complex, at least composed of UIMC1/RAP80, ABRAXAS1, BRCC3/BRCC36, BABAM2 and BABAM1/NBA1. Component of the BRCA1-A complex, at least composed of the BRCA1, BARD1, UIMC1/RAP80, ABRAXAS1, BRCC3/BRCC36, BABAM2 and BABAM1/NBA1. In the BRCA1-A complex, interacts directly with ABRAXAS1. Interacts with ESR1. Interacts with UBE2I. Interacts with NR6A1. Interacts with TSP57. Interacts with TRAIP. Sumoylated. Post-translationally, phosphorylated upon DNA damage by ATM or ATR.

It localises to the nucleus. In terms of biological role, ubiquitin-binding protein. Specifically recognizes and binds 'Lys-63'-linked ubiquitin. Plays a central role in the BRCA1-A complex by specifically binding 'Lys-63'-linked ubiquitinated histones H2A and H2AX at DNA lesions sites, leading to target the BRCA1-BARD1 heterodimer to sites of DNA damage at double-strand breaks (DSBs). The BRCA1-A complex also possesses deubiquitinase activity that specifically removes 'Lys-63'-linked ubiquitin on histones H2A and H2AX. Also weakly binds monoubiquitin but with much less affinity than 'Lys-63'-linked ubiquitin. May interact with monoubiquitinated histones H2A and H2B; the relevance of such results is however unclear in vivo. Does not bind Lys-48'-linked ubiquitin. May indirectly act as a transcriptional repressor by inhibiting the interaction of NR6A1 with the corepressor NCOR1. The protein is BRCA1-A complex subunit RAP80 (Uimc1) of Mus musculus (Mouse).